The primary structure comprises 127 residues: Large ribosomal subunit protein bL20 (127 aa).

The protein belongs to the bacterial ribosomal protein bL20 family.

Functionally, binds directly to 23S ribosomal RNA and is necessary for the in vitro assembly process of the 50S ribosomal subunit. It is not involved in the protein synthesizing functions of that subunit. The protein is Large ribosomal subunit protein bL20 of Bifidobacterium animalis subsp. lactis (strain AD011).